The primary structure comprises 132 residues: Histone H2A (132 aa).

Positions 1-13 are enriched in basic residues; it reads MSAKGKTGRKKAS. The tract at residues 1–21 is disordered; it reads MSAKGKTGRKKASKGTSNSAK.

The protein belongs to the histone H2A family. In terms of assembly, the nucleosome is a histone octamer containing two molecules each of H2A, H2B, H3 and H4 assembled in one H3-H4 heterotetramer and two H2A-H2B heterodimers. The octamer wraps approximately 147 bp of DNA.

It localises to the nucleus. The protein localises to the chromosome. In terms of biological role, core component of nucleosome. Nucleosomes wrap and compact DNA into chromatin, limiting DNA accessibility to the cellular machineries which require DNA as a template. Histones thereby play a central role in transcription regulation, DNA repair, DNA replication and chromosomal stability. DNA accessibility is regulated via a complex set of post-translational modifications of histones, also called histone code, and nucleosome remodeling. The protein is Histone H2A of Plasmodium falciparum.